Here is a 598-residue protein sequence, read N- to C-terminus: Pescadillo homolog (598 aa).

The interval 296–317 (QAMKADSKDKDDNSNDEAPENV) is disordered. A BRCT domain is found at 345–439 (PTATLFEDFV…ELLSANLYLP (95 aa)). Disordered regions lie at residues 452–501 (DALG…EDVE), 515–544 (GIAY…EDEE), and 564–598 (MKYS…VEKK). Residues 463-485 (ESEDESSDSSEESDSEIENEEED) are compositionally biased toward acidic residues. Composition is skewed to basic and acidic residues over residues 520-532 (KAKD…DVAS), 570-579 (QKEDKIEELK), and 586-598 (AKKE…VEKK). A coiled-coil region spans residues 557–598 (QRKLYKKMKYSNQQKEDKIEELKKKKKQLAKKEKTLKKVEKK).

It belongs to the pescadillo family. In terms of assembly, component of the NOP7 complex, composed of ERB1, NOP7 and YTM1. The complex is held together by ERB1, which interacts with NOP7 via its N-terminal domain and with YTM1 via a high-affinity interaction between the seven-bladed beta-propeller domains of the 2 proteins. The NOP7 complex associates with the 66S pre-ribosome.

It localises to the nucleus. The protein resides in the nucleolus. Its subcellular location is the nucleoplasm. Component of the NOP7 complex, which is required for maturation of the 25S and 5.8S ribosomal RNAs and formation of the 60S ribosome. The sequence is that of Pescadillo homolog from Candida glabrata (strain ATCC 2001 / BCRC 20586 / JCM 3761 / NBRC 0622 / NRRL Y-65 / CBS 138) (Yeast).